The following is a 677-amino-acid chain: Protein PALS1 (677 aa).

Positions 1–347 (MTTSHMNGYV…AQIKSPPIKE (347 aa)) are required for the correct localization of PALS1 and PATJ at cell-cell contacts and the normal formation of tight junctions and adherens junctions. The tract at residues 39 to 81 (ELGARTLPVRRSAQLEKIRQQQEDRRRREEEGRSRQELDLNSS) is disordered. Residues 51 to 76 (AQLEKIRQQQEDRRRREEEGRSRQEL) show a composition bias toward basic and acidic residues. 2 L27 domains span residues 121-178 (ALLE…NRPS) and 180-236 (PYPL…MQLE). The PDZ domain occupies 258–338 (IVRIEKAKDI…VLSFVLIPSA (81 aa)). The region spanning 347–419 (ETVVHVKAHF…PGKSFQQQRE (73 aa)) is the SH3 domain. The 182-residue stretch at 481–662 (KRPIALIGPP…SYQELLRLIN (182 aa)) folds into the Guanylate kinase-like domain. 488–495 (GPPNCGQN) lines the ATP pocket. The segment at 506–526 (PDRFAGPVPHTTRSRRDAEAN) is disordered.

Belongs to the MAGUK family. Expressed in the retina and in the neural tube.

Its subcellular location is the apical cell membrane. The protein localises to the cell junction. It is found in the tight junction. In terms of biological role, plays a role in tight junction biogenesis and in the establishment of cell polarity in epithelial cells. Also involved in adherens junction biogenesis. Required for polarized epithelial organization, cell-cell adhesion and remodeling of myocardial cells during heart tube elongation during embryogenesis. Functions in cellular patterning of the retina and development of the retinal pigmented epithelium. Also required for embryo body axis specification. The chain is Protein PALS1 (pals1a) from Danio rerio (Zebrafish).